Consider the following 277-residue polypeptide: Sulfur carrier protein FdhD (277 aa).

Cys-121 acts as the Cysteine persulfide intermediate in catalysis. 260 to 265 (FCKPGR) contributes to the Mo-bis(molybdopterin guanine dinucleotide) binding site.

It belongs to the FdhD family.

Its subcellular location is the cytoplasm. Functionally, required for formate dehydrogenase (FDH) activity. Acts as a sulfur carrier protein that transfers sulfur from IscS to the molybdenum cofactor prior to its insertion into FDH. In Shigella flexneri serotype 5b (strain 8401), this protein is Sulfur carrier protein FdhD.